Consider the following 201-residue polypeptide: NADH-quinone oxidoreductase subunit I (201 aa).

2 4Fe-4S ferredoxin-type domains span residues 78-107 (MSYEKAKSRCVACYMCQTACPMPTLFRIEA) and 116-147 (KVVRFDMNLLNCLFCGLCVDACPVGCLTMTDI). [4Fe-4S] cluster is bound by residues cysteine 87, cysteine 90, cysteine 93, cysteine 97, cysteine 127, cysteine 130, cysteine 133, and cysteine 137.

Belongs to the complex I 23 kDa subunit family. NDH-1 is composed of 14 different subunits. Subunits NuoA, H, J, K, L, M, N constitute the membrane sector of the complex. It depends on [4Fe-4S] cluster as a cofactor.

The protein localises to the cell inner membrane. The catalysed reaction is a quinone + NADH + 5 H(+)(in) = a quinol + NAD(+) + 4 H(+)(out). In terms of biological role, NDH-1 shuttles electrons from NADH, via FMN and iron-sulfur (Fe-S) centers, to quinones in the respiratory chain. The immediate electron acceptor for the enzyme in this species is believed to be ubiquinone. Couples the redox reaction to proton translocation (for every two electrons transferred, four hydrogen ions are translocated across the cytoplasmic membrane), and thus conserves the redox energy in a proton gradient. This chain is NADH-quinone oxidoreductase subunit I, found in Aquifex aeolicus (strain VF5).